The chain runs to 172 residues: MTYFVLFLGLCFVLGGLAVASNPSPYYGVVGLVLASVAGCGWLLSLGISFVSLVLFMVYLGGMLVVFVYSVSLAADPFPEAWGDWRVVGYGMGFVAVLVAGVVVGGFECWDLGMVTVDSVGMFSVRLDFGGVAMFYSCGVGMFLAAGWGLLLTLFVVLELVRGLTRGAIRAV.

5 helical membrane-spanning segments follow: residues methionine 1–serine 21, tyrosine 27–glycine 47, isoleucine 48–valine 68, valine 87–phenylalanine 107, and cysteine 138–leucine 158.

The protein belongs to the complex I subunit 6 family.

It is found in the mitochondrion membrane. The catalysed reaction is a ubiquinone + NADH + 5 H(+)(in) = a ubiquinol + NAD(+) + 4 H(+)(out). Core subunit of the mitochondrial membrane respiratory chain NADH dehydrogenase (Complex I) that is believed to belong to the minimal assembly required for catalysis. Complex I functions in the transfer of electrons from NADH to the respiratory chain. The immediate electron acceptor for the enzyme is believed to be ubiquinone. The protein is NADH-ubiquinone oxidoreductase chain 6 (MT-ND6) of Uria aalge (Common mure).